A 479-amino-acid polypeptide reads, in one-letter code: Poly(A) polymerase catalytic subunit (479 aa).

Active-site residues include Asp202 and Asp204. Residues Asp202, Asp204, and Asp253 each coordinate Ca(2+).

The protein belongs to the poxviridae poly(A) polymerase catalytic subunit family. As to quaternary structure, heterodimer of a large (catalytic) subunit and a small (regulatory) subunit.

The enzyme catalyses RNA(n) + ATP = RNA(n)-3'-adenine ribonucleotide + diphosphate. Polymerase that creates the 3'-poly(A) tail of mRNA's. The chain is Poly(A) polymerase catalytic subunit (OPG063) from Cynomys gunnisoni (Gunnison's prairie dog).